The following is a 255-amino-acid chain: GTP cyclohydrolase III (255 aa).

This sequence belongs to the archaeal-type GTP cyclohydrolase family.

The catalysed reaction is GTP + 3 H2O = 2-amino-5-formylamino-6-(5-phospho-D-ribosylamino)pyrimidin-4(3H)-one + 2 phosphate + 2 H(+). Its function is as follows. Catalyzes the formation of 2-amino-5-formylamino-6-ribofuranosylamino-4(3H)-pyrimidinone ribonucleotide monophosphate and inorganic phosphate from GTP. Also has an independent pyrophosphate phosphohydrolase activity. In Methanosphaera stadtmanae (strain ATCC 43021 / DSM 3091 / JCM 11832 / MCB-3), this protein is GTP cyclohydrolase III.